We begin with the raw amino-acid sequence, 262 residues long: Acyl-[acyl-carrier-protein]--UDP-N-acetylglucosamine O-acyltransferase (262 aa).

It belongs to the transferase hexapeptide repeat family. LpxA subfamily. Homotrimer.

Its subcellular location is the cytoplasm. It catalyses the reaction a (3R)-hydroxyacyl-[ACP] + UDP-N-acetyl-alpha-D-glucosamine = a UDP-3-O-[(3R)-3-hydroxyacyl]-N-acetyl-alpha-D-glucosamine + holo-[ACP]. It functions in the pathway glycolipid biosynthesis; lipid IV(A) biosynthesis; lipid IV(A) from (3R)-3-hydroxytetradecanoyl-[acyl-carrier-protein] and UDP-N-acetyl-alpha-D-glucosamine: step 1/6. In terms of biological role, involved in the biosynthesis of lipid A, a phosphorylated glycolipid that anchors the lipopolysaccharide to the outer membrane of the cell. In Escherichia coli O157:H7, this protein is Acyl-[acyl-carrier-protein]--UDP-N-acetylglucosamine O-acyltransferase.